A 169-amino-acid polypeptide reads, in one-letter code: NADH-quinone oxidoreductase subunit B (169 aa).

The [4Fe-4S] cluster site is built by C45, C46, C111, and C141.

This sequence belongs to the complex I 20 kDa subunit family. NDH-1 is composed of 14 different subunits. Subunits NuoB, C, D, E, F, and G constitute the peripheral sector of the complex. It depends on [4Fe-4S] cluster as a cofactor.

The protein localises to the cell membrane. The catalysed reaction is a quinone + NADH + 5 H(+)(in) = a quinol + NAD(+) + 4 H(+)(out). In terms of biological role, NDH-1 shuttles electrons from NADH, via FMN and iron-sulfur (Fe-S) centers, to quinones in the respiratory chain. The immediate electron acceptor for the enzyme in this species is believed to be a menaquinone. Couples the redox reaction to proton translocation (for every two electrons transferred, four hydrogen ions are translocated across the cytoplasmic membrane), and thus conserves the redox energy in a proton gradient. In Clostridium beijerinckii (strain ATCC 51743 / NCIMB 8052) (Clostridium acetobutylicum), this protein is NADH-quinone oxidoreductase subunit B.